Consider the following 353-residue polypeptide: Terpene synthase 3 (353 aa).

3 residues coordinate Mg(2+): D118, N261, and E269. The short motif at D118 to E122 is the D(D/E)XX(D/E) motif element. The NSE motif motif lies at N261–E269. The WxxxxxRY motif signature appears at W342–Y349.

Belongs to the terpene synthase family. It depends on Mg(2+) as a cofactor.

Functionally, terpene synthase that may be involved in the production of volatile terpenoids. Does not show detectable terpene products with either farnesyl diphosphate (FPP) or geranyl diphosphate (GPP). P.polycephalum has a unique biology and these volatile terpenoids could function in internal communication of P.polycephalum, to mark the territory that have been explored, or they may be involved in chemotaxis. The protein is Terpene synthase 3 of Physarum polycephalum (Slime mold).